A 531-amino-acid chain; its full sequence is Putative lipase ATG15 (531 aa).

The Cytoplasmic portion of the chain corresponds to 1-11; it reads MKPGIKISKRY. The chain crosses the membrane as a helical; Signal-anchor for type II membrane protein span at residues 12–31; sequence SARNASVITVLLLLIYLIYI. The Lumenal portion of the chain corresponds to 32-531; that stretch reads NKETIQTKYQ…WIGICTEYGI (500 aa). Residues Asn-178 and Asn-207 are each glycosylated (N-linked (GlcNAc...) asparagine). Ser-340 serves as the catalytic Charge relay system. A disordered region spans residues 482–513; sequence VPKKHKSSSSTASSTSAETSTLTVGPSPPEKT. Over residues 489-502 the composition is skewed to low complexity; sequence SSSTASSTSAETST.

The protein belongs to the AB hydrolase superfamily. Lipase family. Binds to both phosphatidylinositol (PI) and phosphatidylinositol 3,5-bisphosphate (PIP2).

The protein localises to the endosome. The protein resides in the multivesicular body membrane. It is found in the prevacuolar compartment membrane. The catalysed reaction is a triacylglycerol + H2O = a diacylglycerol + a fatty acid + H(+). Lipase which is essential for lysis of subvacuolar cytoplasm to vacuole targeted bodies and intravacuolar autophagic bodies. Involved in the lysis of intravacuolar multivesicular body (MVB) vesicles. The intravacuolar membrane disintegration by ATG15 is critical to life span extension. This is Putative lipase ATG15 (ATG15) from Kluyveromyces lactis (strain ATCC 8585 / CBS 2359 / DSM 70799 / NBRC 1267 / NRRL Y-1140 / WM37) (Yeast).